The chain runs to 347 residues: Phenylalanine--tRNA ligase alpha subunit (347 aa).

Positions 83–111 (QNLSGGDDSGADPTFDPTLPGTRPSLGHI) are disordered. Glu274 is a Mg(2+) binding site.

This sequence belongs to the class-II aminoacyl-tRNA synthetase family. Phe-tRNA synthetase alpha subunit type 1 subfamily. Tetramer of two alpha and two beta subunits. The cofactor is Mg(2+).

Its subcellular location is the cytoplasm. The catalysed reaction is tRNA(Phe) + L-phenylalanine + ATP = L-phenylalanyl-tRNA(Phe) + AMP + diphosphate + H(+). The chain is Phenylalanine--tRNA ligase alpha subunit from Rhodopirellula baltica (strain DSM 10527 / NCIMB 13988 / SH1).